The following is a 651-amino-acid chain: Maternal embryonic leucine zipper kinase (651 aa).

A Protein kinase domain is found at Tyr11 to Ile263. ATP contacts are provided by residues Ile17–Val25 and Lys40. Thr56 bears the Phosphothreonine; by autocatalysis mark. Asp132 (proton acceptor) is an active-site residue. Tyr163 is modified (phosphotyrosine; by autocatalysis). Thr167 is subject to Phosphothreonine; by autocatalysis. Phosphoserine; by autocatalysis occurs at positions 171 and 253. Residues Leu282 to Leu321 are UBA-like. The tract at residues Arg326 to Val651 is autoinhibitory region. Ser336, Ser343, and Ser356 each carry phosphoserine; by autocatalysis. Tyr367 is modified (phosphotyrosine). Position 391 is a phosphoserine; by autocatalysis (Ser391). Thr398 is modified (phosphothreonine; by autocatalysis). Position 407 is a phosphoserine; by autocatalysis (Ser407). Thr409 carries the post-translational modification Phosphothreonine. Ser431 carries the post-translational modification Phosphoserine; by autocatalysis. The residue at position 478 (Thr478) is a Phosphothreonine. Thr494 is modified (phosphothreonine; by autocatalysis). Ser498 carries the phosphoserine modification. The residue at position 505 (Ser505) is a Phosphoserine; by autocatalysis. Thr518 carries the phosphothreonine modification. At Ser529 the chain carries Phosphoserine; by autocatalysis. The residue at position 529 (Ser529) is a Phosphoserine. Thr539 carries the phosphothreonine; by autocatalysis modification. One can recognise a KA1 domain in the interval Ser602–Val651.

The protein belongs to the protein kinase superfamily. CAMK Ser/Thr protein kinase family. SNF1 subfamily. Monomer. Interacts with ZNF622 and PPP1R8. In terms of processing, autophosphorylated: autophosphorylation of the T-loop at Thr-167 and Ser-171 is required for activation. Thr-478 phosphorylation during mitosis promotes interaction with PPP1R8. As to expression, expressed in placenta, kidney, thymus, testis, ovary and intestine.

The protein resides in the cell membrane. The enzyme catalyses L-tyrosyl-[protein] + ATP = O-phospho-L-tyrosyl-[protein] + ADP + H(+). The catalysed reaction is L-seryl-[protein] + ATP = O-phospho-L-seryl-[protein] + ADP + H(+). It carries out the reaction L-threonyl-[protein] + ATP = O-phospho-L-threonyl-[protein] + ADP + H(+). Its activity is regulated as follows. Activated by autophosphorylation of the T-loop at Thr-167 and Ser-171: in contrast to other members of the SNF1 subfamily, phosphorylation at Thr-167 is not mediated by STK11/LKB1 but via autophosphorylation instead. Inhibited by calcium-binding. Kinase activity is also regulated by reducing agents: dithiothreitol (DTT) or reduced glutathione are required for kinase activity in vitro; such dependence is however not due to the presence of disulfide bonds. Serine/threonine-protein kinase involved in various processes such as cell cycle regulation, self-renewal of stem cells, apoptosis and splicing regulation. Has a broad substrate specificity; phosphorylates BCL2L14, CDC25B, MAP3K5/ASK1 and ZNF622. Acts as an activator of apoptosis by phosphorylating and activating MAP3K5/ASK1. Acts as a regulator of cell cycle, notably by mediating phosphorylation of CDC25B, promoting localization of CDC25B to the centrosome and the spindle poles during mitosis. Plays a key role in cell proliferation and carcinogenesis. Required for proliferation of embryonic and postnatal multipotent neural progenitors. Phosphorylates and inhibits BCL2L14, possibly leading to affect mammary carcinogenesis by mediating inhibition of the pro-apoptotic function of BCL2L14. Also involved in the inhibition of spliceosome assembly during mitosis by phosphorylating ZNF622, thereby contributing to its redirection to the nucleus. May also play a role in primitive hematopoiesis. The polypeptide is Maternal embryonic leucine zipper kinase (MELK) (Homo sapiens (Human)).